The chain runs to 132 residues: Small ribosomal subunit protein uS8 (132 aa).

Belongs to the universal ribosomal protein uS8 family. In terms of assembly, part of the 30S ribosomal subunit. Contacts proteins S5 and S12.

In terms of biological role, one of the primary rRNA binding proteins, it binds directly to 16S rRNA central domain where it helps coordinate assembly of the platform of the 30S subunit. This is Small ribosomal subunit protein uS8 from Francisella philomiragia subsp. philomiragia (strain ATCC 25017 / CCUG 19701 / FSC 153 / O#319-036).